The primary structure comprises 1043 residues: BAG family molecular chaperone regulator 6 (1043 aa).

5 disordered regions span residues lysine 253–valine 294, aspartate 311–isoleucine 331, valine 343–histidine 366, asparagine 410–arginine 500, and serine 533–phenylalanine 566. Composition is skewed to basic and acidic residues over residues aspartate 311–proline 324, valine 343–asparagine 357, serine 416–glutamine 443, and lysine 478–lysine 487. Over residues valine 534–glutamate 543 the composition is skewed to polar residues. A compositionally biased stretch (basic and acidic residues) spans lysine 550–phenylalanine 566. An IQ domain is found at glutamate 568–alanine 597. The BAG domain occupies glutamate 595–lysine 672. The segment covering serine 724 to alanine 741 has biased composition (basic and acidic residues). Disordered regions lie at residues serine 724–glutamate 749, alanine 764–methionine 799, glutamate 817–glutamate 975, and glutamate 1015–leucine 1043. A compositionally biased stretch (low complexity) spans alanine 840–glutamate 852. Residues asparagine 853–glutamate 871 show a composition bias toward basic and acidic residues. Composition is skewed to polar residues over residues glutamine 885 to glycine 899 and serine 919 to glutamate 932. Basic and acidic residues predominate over residues glutamine 934–proline 951. Residues glycine 971–threonine 1024 are a coiled coil. The segment covering leucine 1018–serine 1031 has biased composition (basic residues). Over residues methionine 1034 to leucine 1043 the composition is skewed to polar residues.

In terms of assembly, binds to the ATPase domain of HSP70/HSC70 chaperones. Interacts with calmodulins CAM1, CAM2, CAM3, CAM4, CAM6 and CAM7. Interacts with BAGP1 and APCB1. In terms of tissue distribution, detected in stems, leaves, flowers and roots.

In terms of biological role, co-chaperone that regulates diverse cellular pathways, such as programmed cell death and stress responses. Involved in plant basal resistance. Involved in basal heat response through the regulation of the heat induced small HSP (sHSP) transcriptional cascade. Its function is as follows. Induces autophagy. The polypeptide is BAG family molecular chaperone regulator 6 (Arabidopsis thaliana (Mouse-ear cress)).